The chain runs to 199 residues: dITP/XTP pyrophosphatase (199 aa).

9–14 is a substrate binding site; that stretch reads TGNKGK. Residues E41 and D70 each contribute to the Mg(2+) site. The active-site Proton acceptor is D70. Residues S71, 157–160, K180, and 185–186 contribute to the substrate site; these read FGYD and HR.

This sequence belongs to the HAM1 NTPase family. In terms of assembly, homodimer. The cofactor is Mg(2+).

The enzyme catalyses XTP + H2O = XMP + diphosphate + H(+). The catalysed reaction is dITP + H2O = dIMP + diphosphate + H(+). It carries out the reaction ITP + H2O = IMP + diphosphate + H(+). Pyrophosphatase that catalyzes the hydrolysis of nucleoside triphosphates to their monophosphate derivatives, with a high preference for the non-canonical purine nucleotides XTP (xanthosine triphosphate), dITP (deoxyinosine triphosphate) and ITP. Seems to function as a house-cleaning enzyme that removes non-canonical purine nucleotides from the nucleotide pool, thus preventing their incorporation into DNA/RNA and avoiding chromosomal lesions. The protein is dITP/XTP pyrophosphatase of Mannheimia succiniciproducens (strain KCTC 0769BP / MBEL55E).